The sequence spans 118 residues: Large ribosomal subunit protein bL19 (118 aa).

It belongs to the bacterial ribosomal protein bL19 family.

This protein is located at the 30S-50S ribosomal subunit interface and may play a role in the structure and function of the aminoacyl-tRNA binding site. In Nautilia profundicola (strain ATCC BAA-1463 / DSM 18972 / AmH), this protein is Large ribosomal subunit protein bL19.